Consider the following 255-residue polypeptide: NAD-dependent protein deacylase (255 aa).

Positions 1–253 (MIEEAPRIIA…VKVKRCLENK (253 aa)) constitute a Deacetylase sirtuin-type domain. 20 to 39 (GAGVSAESGIPTFRDRGGLW) is an NAD(+) binding site. Substrate-binding residues include Tyr-64 and Arg-67. NAD(+) is bound at residue 98–101 (QNID). His-116 acts as the Proton acceptor in catalysis. 4 residues coordinate Zn(2+): Cys-124, Cys-127, Cys-151, and Cys-154. NAD(+) is bound by residues 191–193 (GTS), 217–219 (NTK), and Ala-235.

Belongs to the sirtuin family. Class III subfamily. Zn(2+) serves as cofactor.

It is found in the cytoplasm. The catalysed reaction is N(6)-acetyl-L-lysyl-[protein] + NAD(+) + H2O = 2''-O-acetyl-ADP-D-ribose + nicotinamide + L-lysyl-[protein]. It carries out the reaction N(6)-succinyl-L-lysyl-[protein] + NAD(+) + H2O = 2''-O-succinyl-ADP-D-ribose + nicotinamide + L-lysyl-[protein]. In terms of biological role, NAD-dependent lysine deacetylase and desuccinylase that specifically removes acetyl and succinyl groups on target proteins. Modulates the activities of several proteins which are inactive in their acylated form. Deacetylates the N-terminal lysine residue of Alba, the major archaeal chromatin protein and that, in turn, increases Alba's DNA binding affinity, thereby repressing transcription. The polypeptide is NAD-dependent protein deacylase (Thermococcus sibiricus (strain DSM 12597 / MM 739)).